The primary structure comprises 350 residues: Geranylgeranyl diphosphate synthase (350 aa).

Residues Lys-70, Arg-73, and His-102 each contribute to the isopentenyl diphosphate site. 2 residues coordinate Mg(2+): Asp-109 and Asp-113. The short motif at Asp-109–Asp-113 is the DDXXD motif element. Residue Arg-119 participates in isopentenyl diphosphate binding. Positions Asp-240–Gly-244 match the DDXXD motif motif.

It belongs to the FPP/GGPP synthase family. Mg(2+) serves as cofactor.

It carries out the reaction isopentenyl diphosphate + (2E,6E)-farnesyl diphosphate = (2E,6E,10E)-geranylgeranyl diphosphate + diphosphate. The protein operates within isoprenoid biosynthesis; geranylgeranyl diphosphate biosynthesis; geranylgeranyl diphosphate from farnesyl diphosphate and isopentenyl diphosphate: step 1/1. Functionally, catalyzes the condensation of isopentenyl pyrophosphate (IPP) with (2E,6E)-farnesyl diphosphate (E,E-FPP) to yield geranylgeranyl diphosphate (GGPP). The sequence is that of Geranylgeranyl diphosphate synthase from Mycobacterium tuberculosis (strain ATCC 25618 / H37Rv).